Here is a 907-residue protein sequence, read N- to C-terminus: Protein translocase subunit SecA (907 aa).

ATP-binding positions include Q87, 105-109 (GEGKT), and D512. The disordered stretch occupies residues 834–907 (QEDVERMEEQ…KKYKQCHGKI (74 aa)). 2 stretches are compositionally biased toward basic and acidic residues: residues 836–853 (DVER…EAAR) and 873–888 (EEAH…KVGR). C892, C894, C903, and H904 together coordinate Zn(2+). Residues 898–907 (KKYKQCHGKI) show a composition bias toward basic residues.

Belongs to the SecA family. In terms of assembly, monomer and homodimer. Part of the essential Sec protein translocation apparatus which comprises SecA, SecYEG and auxiliary proteins SecDF-YajC and YidC. Zn(2+) is required as a cofactor.

Its subcellular location is the cell inner membrane. It is found in the cytoplasm. It carries out the reaction ATP + H2O + cellular proteinSide 1 = ADP + phosphate + cellular proteinSide 2.. Part of the Sec protein translocase complex. Interacts with the SecYEG preprotein conducting channel. Has a central role in coupling the hydrolysis of ATP to the transfer of proteins into and across the cell membrane, serving both as a receptor for the preprotein-SecB complex and as an ATP-driven molecular motor driving the stepwise translocation of polypeptide chains across the membrane. The protein is Protein translocase subunit SecA of Aliivibrio fischeri (strain MJ11) (Vibrio fischeri).